The following is a 151-amino-acid chain: Ribosome maturation factor RimP (151 aa).

This sequence belongs to the RimP family.

The protein resides in the cytoplasm. Functionally, required for maturation of 30S ribosomal subunits. The polypeptide is Ribosome maturation factor RimP (Endomicrobium trichonymphae).